A 287-amino-acid chain; its full sequence is Bifunctional protein FolD (287 aa).

Residues 160 to 162 (GRS), S189, and T230 each bind NADP(+).

This sequence belongs to the tetrahydrofolate dehydrogenase/cyclohydrolase family. In terms of assembly, homodimer.

The catalysed reaction is (6R)-5,10-methylene-5,6,7,8-tetrahydrofolate + NADP(+) = (6R)-5,10-methenyltetrahydrofolate + NADPH. It carries out the reaction (6R)-5,10-methenyltetrahydrofolate + H2O = (6R)-10-formyltetrahydrofolate + H(+). It participates in one-carbon metabolism; tetrahydrofolate interconversion. Functionally, catalyzes the oxidation of 5,10-methylenetetrahydrofolate to 5,10-methenyltetrahydrofolate and then the hydrolysis of 5,10-methenyltetrahydrofolate to 10-formyltetrahydrofolate. The protein is Bifunctional protein FolD of Chlamydia muridarum (strain MoPn / Nigg).